Here is a 305-residue protein sequence, read N- to C-terminus: Probable lipid kinase YegS-like (305 aa).

The region spanning Met1–Leu129 is the DAGKc domain. ATP-binding positions include Thr39, Gly65 to Asp71, and Thr92. 3 residues coordinate Mg(2+): Leu210, Asp213, and Leu215. Glu268 serves as the catalytic Proton acceptor.

Belongs to the diacylglycerol/lipid kinase family. YegS lipid kinase subfamily. The cofactor is Mg(2+). It depends on Ca(2+) as a cofactor.

The protein localises to the cytoplasm. In terms of biological role, probably phosphorylates lipids; the in vivo substrate is unknown. In Pseudomonas syringae pv. syringae (strain B728a), this protein is Probable lipid kinase YegS-like.